The primary structure comprises 369 residues: tRNA 2-selenouridine synthase (369 aa).

The Rhodanese domain maps to 12–136; the sequence is FLDDIPLMDV…LRNFLFETTR (125 aa). The active-site S-selanylcysteine intermediate is Cys-95.

This sequence belongs to the SelU family. As to quaternary structure, monomer.

It carries out the reaction 5-methylaminomethyl-2-thiouridine(34) in tRNA + selenophosphate + (2E)-geranyl diphosphate + H2O + H(+) = 5-methylaminomethyl-2-selenouridine(34) in tRNA + (2E)-thiogeraniol + phosphate + diphosphate. It catalyses the reaction 5-methylaminomethyl-2-thiouridine(34) in tRNA + (2E)-geranyl diphosphate = 5-methylaminomethyl-S-(2E)-geranyl-thiouridine(34) in tRNA + diphosphate. The enzyme catalyses 5-methylaminomethyl-S-(2E)-geranyl-thiouridine(34) in tRNA + selenophosphate + H(+) = 5-methylaminomethyl-2-(Se-phospho)selenouridine(34) in tRNA + (2E)-thiogeraniol. The catalysed reaction is 5-methylaminomethyl-2-(Se-phospho)selenouridine(34) in tRNA + H2O = 5-methylaminomethyl-2-selenouridine(34) in tRNA + phosphate. In terms of biological role, involved in the post-transcriptional modification of the uridine at the wobble position (U34) of tRNA(Lys), tRNA(Glu) and tRNA(Gln). Catalyzes the conversion of 2-thiouridine (S2U-RNA) to 2-selenouridine (Se2U-RNA). Acts in a two-step process involving geranylation of 2-thiouridine (S2U) to S-geranyl-2-thiouridine (geS2U) and subsequent selenation of the latter derivative to 2-selenouridine (Se2U) in the tRNA chain. The protein is tRNA 2-selenouridine synthase of Pseudomonas aeruginosa (strain LESB58).